Here is a 62-residue protein sequence, read N- to C-terminus: NLYQFKNMIQCANHGRRATWHYLDYGCYCGPGGLGTPVDELDRCCKTHDDCYIEAGKKGCFP.

Residues Y28, G30, and G32 each coordinate Ca(2+). A disulfide bond links C29 and C45. H48 is a catalytic residue. D49 contributes to the Ca(2+) binding site.

Ca(2+) serves as cofactor. As to expression, expressed by the venom gland.

The protein resides in the secreted. It carries out the reaction a 1,2-diacyl-sn-glycero-3-phosphocholine + H2O = a 1-acyl-sn-glycero-3-phosphocholine + a fatty acid + H(+). Its function is as follows. Snake venom phospholipase A2 (PLA2) that inhibits collagen-induced platelet aggregation. In terms of inhibition of platelet aggregation, superbin a is more potent as superbin b, c, and d. PLA2 catalyzes the calcium-dependent hydrolysis of the 2-acyl groups in 3-sn-phosphoglycerides. In Austrelaps superbus (Lowland copperhead snake), this protein is Phospholipase A2 superbin a.